A 207-amino-acid polypeptide reads, in one-letter code: Ras-related protein Rab-8A (207 aa).

GTP is bound by residues S17, G18, V19, G20, K21, T22, C23, S39, and T40. A Mg(2+)-binding site is contributed by T22. Short sequence motifs (switch) lie at residues 31–45 and 63–80; these read DAFN…GIDF and DTAG…YYRG. Mg(2+)-binding residues include T40 and D63. The GTP site is built by G66, N121, K122, D124, A152, and K153. Cysteine methyl ester is present on C204. A lipid anchor (S-geranylgeranyl cysteine) is attached at C204. A propeptide spans 205 to 207 (removed in mature form); sequence VLL.

The protein belongs to the small GTPase superfamily. Rab family. It depends on Mg(2+) as a cofactor.

It localises to the cell membrane. It is found in the golgi apparatus. The protein localises to the endosome membrane. Its subcellular location is the recycling endosome membrane. The protein resides in the cell projection. It localises to the cilium. It is found in the cytoplasmic vesicle. The protein localises to the phagosome membrane. Its subcellular location is the cytoplasm. The protein resides in the cytoskeleton. It localises to the microtubule organizing center. It is found in the centrosome. The protein localises to the centriole. Its subcellular location is the cilium basal body. The protein resides in the midbody. The enzyme catalyses GTP + H2O = GDP + phosphate + H(+). With respect to regulation, regulated by guanine nucleotide exchange factors (GEFs) which promote the exchange of bound GDP for free GTP, GTPase activating proteins (GAPs) which increase the GTP hydrolysis activity, and GDP dissociation inhibitors (GDIs) which inhibit the dissociation of the nucleotide from the GTPase. Activated in response to insulin. The small GTPases Rab are key regulators of intracellular membrane trafficking, from the formation of transport vesicles to their fusion with membranes. Rabs cycle between an inactive GDP-bound form and an active GTP-bound form that is able to recruit to membranes different sets of downstream effectors directly responsible for vesicle formation, movement, tethering and fusion. RAB8A is involved in polarized vesicular trafficking and neurotransmitter release. Together with RAB11A, RAB3IP, the exocyst complex, PARD3, PRKCI, ANXA2, CDC42 and DNMBP promotes transcytosis of PODXL to the apical membrane initiation sites (AMIS), apical surface formation and lumenogenesis. Regulates the compacted morphology of the Golgi. Together with MYO5B and RAB11A participates in epithelial cell polarization. Also involved in membrane trafficking to the cilium and ciliogenesis. Together with MICALL2, may also regulate adherens junction assembly. May play a role in insulin-induced transport to the plasma membrane of the glucose transporter GLUT4 and therefore play a role in glucose homeostasis. Involved in autophagy. Participates in the export of a subset of neosynthesized proteins through a Rab8-Rab10-Rab11-dependent endososomal export route. Targeted to and stabilized on stressed lysosomes through LRRK2 phosphorylation. Suppresses stress-induced lysosomal enlargement through EHBP1 and EHNP1L1 effector proteins. This is Ras-related protein Rab-8A (RAB8A) from Gallus gallus (Chicken).